A 346-amino-acid chain; its full sequence is Probable dolichyl-diphosphooligosaccharide--protein glycosyltransferase subunit 3B (346 aa).

The N-terminal stretch at 1 to 22 (MALKSKLVSLLFLIATLSSTFA) is a signal peptide. At 23 to 189 (ASFSDSDSDS…KVGPIQRPPL (167 aa)) the chain is on the lumenal side. N-linked (GlcNAc...) asparagine glycosylation is present at N108. A helical transmembrane segment spans residues 190-210 (LSKPQIGIIVALIVIATPFII). The Cytoplasmic segment spans residues 211–225 (KRVLKGETILHDTRL). The helical transmembrane segment at 226–246 (WLSGAIFIYFFSVAGTMHNII) threads the bilayer. The Lumenal portion of the chain corresponds to 247-277 (RKMPMFLQDRNDPNKLVFFYQGSGMQLGAEG). The chain crosses the membrane as a helical span at residues 278–298 (FAVGFLYTVVGLLLAFVTNVL). Topologically, residues 299 to 308 (VRVKNITAQR) are cytoplasmic. The helical transmembrane segment at 309-329 (LIMLLALFISFWAVKKVVYLD) threads the bilayer. The Lumenal segment spans residues 330–346 (NWKTGYGIHPYWPSSWR).

Belongs to the OST3/OST6 family. As to quaternary structure, component of the oligosaccharyltransferase (OST) complex.

Its subcellular location is the endoplasmic reticulum membrane. In terms of biological role, subunit of the oligosaccharyl transferase (OST) complex that catalyzes the initial transfer of a defined glycan (Glc(3)Man(9)GlcNAc(2) in eukaryotes) from the lipid carrier dolichol-pyrophosphate to an asparagine residue within an Asn-X-Ser/Thr consensus motif in nascent polypeptide chains, the first step in protein N-glycosylation. N-glycosylation occurs cotranslationally and the complex associates with the Sec61 complex at the channel-forming translocon complex that mediates protein translocation across the endoplasmic reticulum (ER). All subunits are required for a maximal enzyme activity. The sequence is that of Probable dolichyl-diphosphooligosaccharide--protein glycosyltransferase subunit 3B (OST3B) from Arabidopsis thaliana (Mouse-ear cress).